The following is a 322-amino-acid chain: Putative small RNA degrading nuclease 4 (322 aa).

In terms of domain architecture, Exonuclease spans 75-213 (MLALDCEMVL…HDAAAAMKLA (139 aa)).

The protein belongs to the REXO1/REXO3 family.

The protein resides in the nucleus. Its function is as follows. Putative 3'-5' exonuclease degrading single-stranded small RNAs. This chain is Putative small RNA degrading nuclease 4 (SDN4), found in Arabidopsis thaliana (Mouse-ear cress).